Reading from the N-terminus, the 314-residue chain is MRPLAIIGPTGSGKSQLALDVAERLAGEVPAEIVNADAMQLYRGMDIGTAKLSVAARRGIPHHQLDVLNVAETATVARYQQAAAADIEAIIARGHVPIVVGGSMLYVQSLLDNWSFPATDPAVRARWEECLAELGVGELHAELARRDPAAAATILPTDGRRIVRALEVIELTGQPFAASAPRIGAAQWGTAIIGLDCDTPILDDRLAVRTDSMFERGLVEEVRVLLRAGLRDGVTAARALGYAQVLAALDAGGGAELLDDAREQTYFGTRRYVRRQRSWFRRDHRVHWCDAGATGPSDRAAMVDEALRVWRHVT.

8–15 contributes to the ATP binding site; it reads GPTGSGKS. 10–15 lines the substrate pocket; that stretch reads TGSGKS.

It belongs to the IPP transferase family. As to quaternary structure, monomer. The cofactor is Mg(2+).

It catalyses the reaction adenosine(37) in tRNA + dimethylallyl diphosphate = N(6)-dimethylallyladenosine(37) in tRNA + diphosphate. In terms of biological role, catalyzes the transfer of a dimethylallyl group onto the adenine at position 37 in tRNAs that read codons beginning with uridine, leading to the formation of N6-(dimethylallyl)adenosine (i(6)A). The polypeptide is tRNA dimethylallyltransferase 2 (Mycobacterium marinum (strain ATCC BAA-535 / M)).